A 377-amino-acid polypeptide reads, in one-letter code: MTKKYVALIFGGNSSEHDVSKRSAQNFYDAILATGKYRITVFAIAQNGYVLDPERSKRILALEDERPIVADYMTTVDQQDPLSRINALRAAGDFDIFFPVVHGNLGEDGTLQGLFKLLNKPYVGAPLRGHAVSFDKVLTKELLTVNNIRNTKYIVVDEKTAKTLTWAQVVKDLGDVVFVKAANQGSSVGVSRAKTADEFEAALTDSFQYDYKVLIEAAVKGPRELEVGVIGNEDPIVSEIGAHHVPNQGDGDAWYDYNNKFVDNSSVQFEIPANLPDAVTAEVKDMALKAYKVLDLRGEARMDFLLDENNVPYLGEPNTLPGFTNMSLFKRLWDYSDIDNVELVDKLIDYGFAEFEKNAQLSYEFVSLGEEKIGKFN.

The ATP-grasp domain maps to 140–349; sequence KELLTVNNIR…NVELVDKLID (210 aa). 170–225 serves as a coordination point for ATP; the sequence is VKDLGDVVFVKAANQGSSVGVSRAKTADEFEAALTDSFQYDYKVLIEAAVKGPREL. The Mg(2+) site is built by aspartate 303, glutamate 316, and asparagine 318.

The protein belongs to the D-alanine--D-alanine ligase family. Mg(2+) is required as a cofactor. Requires Mn(2+) as cofactor.

The protein resides in the cytoplasm. The enzyme catalyses 2 D-alanine + ATP = D-alanyl-D-alanine + ADP + phosphate + H(+). It functions in the pathway cell wall biogenesis; peptidoglycan biosynthesis. Functionally, cell wall formation. The sequence is that of D-alanine--D-alanine ligase from Leuconostoc citreum (strain KM20).